Reading from the N-terminus, the 436-residue chain is UBX domain-containing protein 7 (436 aa).

Residue Lys-19 forms a Glycyl lysine isopeptide (Lys-Gly) (interchain with G-Cter in ubiquitin) linkage. Residues 115-141 (AGESSSRETNPGLAREEKSSRDVHRKN) are disordered. A UBX domain is found at 212-290 (LHSSKCVLQI…ELTPRSALLL (79 aa)). The segment covering 325 to 346 (DKDPEVTSQREETSKPNRHEVR) has biased composition (basic and acidic residues). 2 disordered regions span residues 325 to 357 (DKDP…AASS) and 371 to 436 (SSAH…EDKK). The span at 347–357 (SSTPLSGAASS) shows a compositional bias: low complexity. The span at 371–408 (SSAHASPMLTPSGTRYPSETNLTTSRSVSPNVFQFVNN) shows a compositional bias: polar residues. Position 388 is a phosphoserine (Ser-388). The span at 426–436 (HLEKKKDEDKK) shows a compositional bias: basic and acidic residues.

Interacts with CDC48.

The protein localises to the endoplasmic reticulum. Involved in CDC48-dependent protein degradation through the ubiquitin/proteasome pathway. This Saccharomyces cerevisiae (strain ATCC 204508 / S288c) (Baker's yeast) protein is UBX domain-containing protein 7 (UBX7).